Reading from the N-terminus, the 443-residue chain is Zinc finger protein 713 (443 aa).

Residues 1 to 10 are compositionally biased toward polar residues; it reads MPSQNAVFSQ. 2 disordered regions span residues 1-23 and 99-118; these read MPSQ…NDGS and DTHP…TSQN. The region spanning 32-102 is the KRAB domain; that stretch reads LTFQDVAVDF…ERDSLLDTHP (71 aa). Residues 99-112 show a composition bias toward basic and acidic residues; the sequence is DTHPDGENRPEIKK. A C2H2-type 1; degenerate zinc finger spans residues 255–280; sequence HTAEKPSECGKAFSHTSSLSQPQMLL. 5 consecutive C2H2-type zinc fingers follow at residues 286-308, 314-336, 342-364, 370-392, and 398-420; these read YKCD…QRIH, FICN…LRIH, YKCN…HRLH, YECG…ERTH, and YKCN…RKIH.

Belongs to the krueppel C2H2-type zinc-finger protein family. As to expression, expressed in fetal and adult brain.

The protein resides in the nucleus. Its function is as follows. May be involved in transcriptional regulation. In Homo sapiens (Human), this protein is Zinc finger protein 713.